Here is a 481-residue protein sequence, read N- to C-terminus: Tripartite motif-containing protein 10 (481 aa).

The RING-type zinc finger occupies 16-61 (CPICQGTLREPVTIDCGHNFCRACLTRYCEIPGPDLEESPTCPLCK). The B box-type zinc finger occupies 94 to 135 (GEEDVCQEHGEKIYFFCEDDEMQLCVVCREAGEHATHTMRFL). Zn(2+) is bound by residues cysteine 99, histidine 102, cysteine 121, and histidine 127. Residues 150-177 (LKCLRKEREEIQEIQSRENKRMQVLLTQ) adopt a coiled-coil conformation. Positions 292–481 (REMKMFLEKL…GRGSSFSLSS (190 aa)) constitute a B30.2/SPRY domain.

Belongs to the TRIM/RBCC family. Interacts with IFNAR1; this interaction prevents association of IFNAR1 with TYK2.

Its subcellular location is the cytoplasm. Its function is as follows. E3 ligase that plays an essential role in the differentiation and survival of terminal erythroid cells. May directly bind to PTEN and promote its ubiquitination, resulting in its proteasomal degradation and activation of hypertrophic signaling. In addition, plays a role in immune response regulation by repressing the phosphorylation of STAT1 and STAT2 in the interferon/JAK/STAT signaling pathway independent of its E3 ligase activity. Mechanistically, interacts with the intracellular domain of IFNAR1 and thereby inhibits the association between TYK2 and IFNAR1. The polypeptide is Tripartite motif-containing protein 10 (TRIM10) (Homo sapiens (Human)).